Here is a 175-residue protein sequence, read N- to C-terminus: Peptide deformylase (175 aa).

Residues Cys96 and His138 each coordinate Fe cation. Residue Glu139 is part of the active site. Residue His142 participates in Fe cation binding.

Belongs to the polypeptide deformylase family. The cofactor is Fe(2+).

It catalyses the reaction N-terminal N-formyl-L-methionyl-[peptide] + H2O = N-terminal L-methionyl-[peptide] + formate. Removes the formyl group from the N-terminal Met of newly synthesized proteins. Requires at least a dipeptide for an efficient rate of reaction. N-terminal L-methionine is a prerequisite for activity but the enzyme has broad specificity at other positions. This chain is Peptide deformylase, found in Helicobacter pylori (strain Shi470).